Here is a 473-residue protein sequence, read N- to C-terminus: Cysteine--tRNA ligase (473 aa).

Cysteine 27 lines the Zn(2+) pocket. The 'HIGH' region motif lies at 29–39; it reads ITPYDHMHVGH. Zn(2+) contacts are provided by cysteine 213, histidine 238, and glutamate 242. The short motif at 271 to 275 is the 'KMSKS' region element; it reads KMSKS. Position 274 (lysine 274) interacts with ATP.

The protein belongs to the class-I aminoacyl-tRNA synthetase family. It depends on Zn(2+) as a cofactor.

The protein localises to the cytoplasm. The catalysed reaction is tRNA(Cys) + L-cysteine + ATP = L-cysteinyl-tRNA(Cys) + AMP + diphosphate. The chain is Cysteine--tRNA ligase from Pyrobaculum islandicum (strain DSM 4184 / JCM 9189 / GEO3).